The chain runs to 192 residues: Leucine-rich repeat-containing protein 51 (192 aa).

LRR repeat units follow at residues 49-71 (SLTQSLWLNNNVLNDLRDFNQVA), 80-101 (NLAWIDLSFNDLTSIDPVLTTF), and 103-124 (NLSVLYLHGNSIQHLGEVNKLA). Positions 137 to 175 (NPMEEEKGYRQYVLCTLPHITTFDFSGVTKADRTTAEVW) constitute an LRRCT domain.

The protein resides in the cytoplasm. The sequence is that of Leucine-rich repeat-containing protein 51 from Macaca mulatta (Rhesus macaque).